Reading from the N-terminus, the 258-residue chain is Transcription initiation factor TFIID subunit 9B (258 aa).

Met-1 is modified (N-acetylmethionine). Ser-147 bears the Phosphoserine mark. Phosphothreonine is present on residues Thr-159 and Thr-174. Position 177 is a phosphoserine (Ser-177). The segment covering Ser-227–Asn-236 has biased composition (polar residues). The interval Ser-227 to Met-258 is disordered. Acidic residues predominate over residues Asp-244–Met-258.

The protein belongs to the TAF9 family. In terms of assembly, binds TAF5 and TAF6. Component of TFIID and the TATA-binding protein-free TAF complex (TFTC). TFIID is composed of TATA binding protein (TBP) and a number of TBP-associated factors (TAFs). Binds N-terminal domain of p53/TP53 which is essential for transcription.

It is found in the nucleus. Functionally, essential for cell viability. TAF9 and TAF9L are involved in transcriptional activation as well as repression of distinct but overlapping sets of genes. May have a role in gene regulation associated with apoptosis. TAFs are components of the transcription factor IID (TFIID) complex, the TBP-free TAFII complex (TFTC), the PCAF histone acetylase complex and the STAGA transcription coactivator-HAT complex. TFIID or TFTC are essential for the regulation of RNA polymerase II-mediated transcription. The polypeptide is Transcription initiation factor TFIID subunit 9B (Taf9b) (Rattus norvegicus (Rat)).